The chain runs to 459 residues: ATP-dependent protease ATPase subunit HslU (459 aa).

ATP-binding positions include V26, 68 to 73 (GVGKTE), D271, E337, and R409.

It belongs to the ClpX chaperone family. HslU subfamily. A double ring-shaped homohexamer of HslV is capped on each side by a ring-shaped HslU homohexamer. The assembly of the HslU/HslV complex is dependent on binding of ATP.

The protein localises to the cytoplasm. In terms of biological role, ATPase subunit of a proteasome-like degradation complex; this subunit has chaperone activity. The binding of ATP and its subsequent hydrolysis by HslU are essential for unfolding of protein substrates subsequently hydrolyzed by HslV. HslU recognizes the N-terminal part of its protein substrates and unfolds these before they are guided to HslV for hydrolysis. This is ATP-dependent protease ATPase subunit HslU from Xylella fastidiosa (strain M12).